Consider the following 155-residue polypeptide: Small ribosomal subunit protein uS7c (155 aa).

The protein belongs to the universal ribosomal protein uS7 family. Part of the 30S ribosomal subunit.

Its subcellular location is the plastid. It is found in the chloroplast. Functionally, one of the primary rRNA binding proteins, it binds directly to 16S rRNA where it nucleates assembly of the head domain of the 30S subunit. The sequence is that of Small ribosomal subunit protein uS7c (rps7) from Houttuynia cordata (Chameleon plant).